A 939-amino-acid polypeptide reads, in one-letter code: Progesterone receptor (939 aa).

A compositionally biased stretch (basic and acidic residues) spans 1–11; the sequence is MTERTGKDARA. The tract at residues 1 to 174 is AF3; mediates transcriptional activation (in isoform B); sequence MTERTGKDAR…RSSQGAACPL (174 aa). Positions 1–302 are disordered; the sequence is MTERTGKDAR…AEQDAPAPGC (302 aa). The interval 1–572 is modulating, Ala/Pro-rich; the sequence is MTERTGKDAR…YSFESLPQKI (572 aa). A Glycyl lysine isopeptide (Lys-Gly) (interchain with G-Cter in SUMO) cross-link involves residue Lys7. The segment covering 15 to 26 has biased composition (low complexity); sequence AGGAPSPAPAAE. Phosphoserine is present on Ser20. The segment covering 27–36 has biased composition (basic and acidic residues); it reads PESRRRDGGR. Low complexity predominate over residues 49–67; that stretch reads AAAAAAAAAAASAAPSAPS. The residue at position 141 (Ser141) is a Phosphoserine. The tract at residues 175 to 314 is mediates transcriptional transrepression (in isoform A); the sequence is MSRPEGKAGD…LATTMMDFIH (140 aa). The Nuclear localization signal signature appears at 193 to 197; that stretch reads KGPPR. Phosphoserine is present on Ser200. Low complexity-rich tracts occupy residues 211-230 and 257-278; these read GAHA…AALG and PAAA…TAPV. The residue at position 303 (Ser303) is a Phosphoserine; by MAPK1. Position 349 is a phosphoserine; by MAPK (Ser349). Lys392 is covalently cross-linked (Glycyl lysine isopeptide (Lys-Gly) (interchain with G-Cter in SUMO); alternate). Residue Lys392 forms a Glycyl lysine isopeptide (Lys-Gly) (interchain with G-Cter in ubiquitin); alternate linkage. Residue Ser404 is modified to Phosphoserine; by CDK2. Positions 463 to 552 are AF1; mediates transcriptional activation; it reads PALECVLYKA…VYQPYLNYLR (90 aa). Residue Lys537 forms a Glycyl lysine isopeptide (Lys-Gly) (interchain with G-Cter in SUMO) linkage. 2 NR C4-type zinc fingers span residues 573–593 and 609–633; these read CLIC…CGSC and CAGR…LRKC. A DNA-binding region (nuclear receptor) is located at residues 573-645; the sequence is CLICGDEASG…AGMVLGGRKF (73 aa). Ser682 is modified (phosphoserine). One can recognise an NR LBD domain in the interval 685–919; that stretch reads QDIQLIPPLI…EFPEMMSEVI (235 aa). The interval 693–939 is AF2; mediates transcriptional activation; sequence LINLLMSIEP…MVKPLLFHKK (247 aa).

Belongs to the nuclear hormone receptor family. NR3 subfamily. As to quaternary structure, interacts with SMARD1 and UNC45A. Interacts with CUEDC2; the interaction promotes ubiquitination, decreases sumoylation, and represses transcriptional activity. Interacts with PIAS3; the interaction promotes sumoylation of PR in a hormone-dependent manner, inhibits DNA-binding, and alters nuclear export. Interacts with SP1; the interaction requires ligand-induced phosphorylation on Ser-349 by ERK1/2-MAPK. Interacts with PRMT2. Isoform A interacts with NCOR2. Isoform B (but not isoform A) interacts with NCOA2 and NCOA1. Isoform B (but not isoform A) interacts with KLF9. Interacts with GTF2B. Phosphorylated on multiple serine sites. Several of these sites are hormone-dependent. Phosphorylation on Ser-303 occurs preferentially on isoform B, is highly hormone-dependent and modulates ubiquitination and sumoylation on Lys-392. Phosphorylation on Ser-303 and Ser-349 also requires induction by hormone. Basal phosphorylation on Ser-200 and Ser-404 is increased in response to progesterone and can be phosphorylated in vitro by the CDK2-A1 complex. Increased levels of phosphorylation on Ser-404 also in the presence of EGF, heregulin, IGF, PMA and FBS. Phosphorylation at this site by CDK2 is ligand-independent, and increases nuclear translocation and transcriptional activity. Phosphorylation at Ser-303, but not at Ser-200, is impaired during the G(2)/M phase of the cell cycle. Phosphorylation on Ser-349 by ERK1/2 MAPK is required for interaction with SP1. In terms of processing, sumoylation is hormone-dependent and represses transcriptional activity. Sumoylation on all three sites is enhanced by PIAS3. Desumoylated by SENP1. Sumoylation on Lys-392, the main site of sumoylation, is repressed by ubiquitination on the same site, and modulated by phosphorylation at Ser-303. Post-translationally, ubiquitination is hormone-dependent and represses sumoylation on the same site. Promoted by MAPK-mediated phosphorylation on Ser-303. Palmitoylated by ZDHHC7 and ZDHHC21. Palmitoylation is required for plasma membrane targeting and for rapid intracellular signaling via ERK and AKT kinases and cAMP generation. Expressed in mammary gland and uterus.

Its subcellular location is the nucleus. The protein resides in the cytoplasm. The steroid hormones and their receptors are involved in the regulation of eukaryotic gene expression and affect cellular proliferation and differentiation in target tissues. Depending on the isoform, progesterone receptor functions as a transcriptional activator or repressor. Functionally, ligand-dependent transdominant repressor of steroid hormone receptor transcriptional activity including repression of its isoform B, MR and ER. Transrepressional activity may involve recruitment of corepressor NCOR2. In terms of biological role, transcriptional activator of several progesteron-dependent promoters in a variety of cell types. Involved in activation of SRC-dependent MAPK signaling on hormone stimulation. This is Progesterone receptor (PGR) from Canis lupus familiaris (Dog).